The chain runs to 70 residues: Small ribosomal subunit protein bS18c (70 aa).

The protein belongs to the bacterial ribosomal protein bS18 family. Part of the 30S ribosomal subunit.

The protein localises to the plastid. Its subcellular location is the chloroplast. In Gracilaria tenuistipitata var. liui (Red alga), this protein is Small ribosomal subunit protein bS18c.